The following is a 493-amino-acid chain: Glutamyl-tRNA(Gln) amidotransferase subunit A (493 aa).

Residues Lys-79 and Ser-159 each act as charge relay system in the active site. Ser-183 functions as the Acyl-ester intermediate in the catalytic mechanism.

Belongs to the amidase family. GatA subfamily. In terms of assembly, heterotrimer of A, B and C subunits.

The enzyme catalyses L-glutamyl-tRNA(Gln) + L-glutamine + ATP + H2O = L-glutaminyl-tRNA(Gln) + L-glutamate + ADP + phosphate + H(+). Its function is as follows. Allows the formation of correctly charged Gln-tRNA(Gln) through the transamidation of misacylated Glu-tRNA(Gln) in organisms which lack glutaminyl-tRNA synthetase. The reaction takes place in the presence of glutamine and ATP through an activated gamma-phospho-Glu-tRNA(Gln). The sequence is that of Glutamyl-tRNA(Gln) amidotransferase subunit A from Allorhizobium ampelinum (strain ATCC BAA-846 / DSM 112012 / S4) (Agrobacterium vitis (strain S4)).